A 320-amino-acid chain; its full sequence is Ferrochelatase (320 aa).

Residues H194 and E275 each contribute to the Fe cation site.

It belongs to the ferrochelatase family.

The protein resides in the cytoplasm. It catalyses the reaction heme b + 2 H(+) = protoporphyrin IX + Fe(2+). The protein operates within porphyrin-containing compound metabolism; protoheme biosynthesis; protoheme from protoporphyrin-IX: step 1/1. Its function is as follows. Catalyzes the ferrous insertion into protoporphyrin IX. In Yersinia pestis bv. Antiqua (strain Antiqua), this protein is Ferrochelatase.